Here is a 151-residue protein sequence, read N- to C-terminus: Chaperonin GroEL (151 aa).

D41–T45 provides a ligand contact to ATP.

It belongs to the chaperonin (HSP60) family. As to quaternary structure, forms a cylinder of 14 subunits composed of two heptameric rings stacked back-to-back. Interacts with the co-chaperonin GroES.

It localises to the cytoplasm. It catalyses the reaction ATP + H2O + a folded polypeptide = ADP + phosphate + an unfolded polypeptide.. Functionally, together with its co-chaperonin GroES, plays an essential role in assisting protein folding. The GroEL-GroES system forms a nano-cage that allows encapsulation of the non-native substrate proteins and provides a physical environment optimized to promote and accelerate protein folding. The protein is Chaperonin GroEL of Mycobacterium marinum.